Reading from the N-terminus, the 207-residue chain is Small ribosomal subunit protein uS4 (207 aa).

The disordered stretch occupies residues 35 to 54 (RPKPPGPQLGRPRRLSDRGQ). The region spanning 97–163 (RRLDNVLFRL…AYFKTLAENI (67 aa)) is the S4 RNA-binding domain.

It belongs to the universal ribosomal protein uS4 family. In terms of assembly, part of the 30S ribosomal subunit. Contacts protein S5. The interaction surface between S4 and S5 is involved in control of translational fidelity.

Its function is as follows. One of the primary rRNA binding proteins, it binds directly to 16S rRNA where it nucleates assembly of the body of the 30S subunit. Functionally, with S5 and S12 plays an important role in translational accuracy. In Dehalococcoides mccartyi (strain CBDB1), this protein is Small ribosomal subunit protein uS4.